Reading from the N-terminus, the 187-residue chain is NADH-quinone oxidoreductase subunit B (187 aa).

Over residues 1–10 (MTADHNRALH) the composition is skewed to basic and acidic residues. The tract at residues 1–22 (MTADHNRALHDAPTARGGEVRQ) is disordered. The [4Fe-4S] cluster site is built by cysteine 66, cysteine 67, cysteine 131, and cysteine 161.

The protein belongs to the complex I 20 kDa subunit family. In terms of assembly, NDH-1 is composed of 14 different subunits. Subunits NuoB, C, D, E, F, and G constitute the peripheral sector of the complex. [4Fe-4S] cluster serves as cofactor.

The protein resides in the cell inner membrane. The enzyme catalyses a quinone + NADH + 5 H(+)(in) = a quinol + NAD(+) + 4 H(+)(out). Its function is as follows. NDH-1 shuttles electrons from NADH, via FMN and iron-sulfur (Fe-S) centers, to quinones in the respiratory chain. Couples the redox reaction to proton translocation (for every two electrons transferred, four hydrogen ions are translocated across the cytoplasmic membrane), and thus conserves the redox energy in a proton gradient. The protein is NADH-quinone oxidoreductase subunit B of Erythrobacter litoralis (strain HTCC2594).